The following is a 316-amino-acid chain: Small ribosomal subunit protein RACK1 (316 aa).

WD repeat units lie at residues Q4–T46, Y52–S93, T94–L135, V137–T180, N181–L221, N222–E263, and G264–S312.

Belongs to the WD repeat G protein beta family. Ribosomal protein RACK1 subfamily.

The protein is Small ribosomal subunit protein RACK1 of Biomphalaria glabrata (Bloodfluke planorb).